A 256-amino-acid polypeptide reads, in one-letter code: Protein crossbronx-like (256 aa).

One can recognise a UBC core domain in the interval 17-179; the sequence is NQGYKVLAEY…AKVSILWSCQ (163 aa).

This sequence belongs to the ubiquitin-conjugating enzyme family. FTS subfamily.

In Drosophila virilis (Fruit fly), this protein is Protein crossbronx-like.